We begin with the raw amino-acid sequence, 238 residues long: Uridylate kinase (238 aa).

Residue 11-14 (KLSG) coordinates ATP. Gly-52 serves as a coordination point for UMP. ATP is bound by residues Gly-53 and Arg-57. UMP-binding positions include Asp-72 and 134-141 (TGFSYFTT). Residues Asn-162, Tyr-168, and Asp-171 each coordinate ATP.

Belongs to the UMP kinase family. As to quaternary structure, homohexamer.

Its subcellular location is the cytoplasm. The enzyme catalyses UMP + ATP = UDP + ADP. It participates in pyrimidine metabolism; CTP biosynthesis via de novo pathway; UDP from UMP (UMPK route): step 1/1. Inhibited by UTP. Functionally, catalyzes the reversible phosphorylation of UMP to UDP. This Mesoplasma florum (strain ATCC 33453 / NBRC 100688 / NCTC 11704 / L1) (Acholeplasma florum) protein is Uridylate kinase.